The following is a 368-amino-acid chain: Phospho-N-acetylmuramoyl-pentapeptide-transferase (368 aa).

Transmembrane regions (helical) follow at residues 34–54 (GAVV…IDHL), 79–99 (TPTM…VLWA), 102–122 (LNPY…VGFY), 140–160 (ARLL…VRLG), 176–196 (LVIK…VGAG), 207–227 (GLAI…AYLA), 247–267 (LAVL…FNAP), 271–291 (IFMG…IAVA), 296–316 (IVLA…IVQV), and 345–365 (QIVI…LSTL).

Belongs to the glycosyltransferase 4 family. MraY subfamily. Requires Mg(2+) as cofactor.

It localises to the cell inner membrane. The catalysed reaction is UDP-N-acetyl-alpha-D-muramoyl-L-alanyl-gamma-D-glutamyl-meso-2,6-diaminopimeloyl-D-alanyl-D-alanine + di-trans,octa-cis-undecaprenyl phosphate = di-trans,octa-cis-undecaprenyl diphospho-N-acetyl-alpha-D-muramoyl-L-alanyl-D-glutamyl-meso-2,6-diaminopimeloyl-D-alanyl-D-alanine + UMP. It functions in the pathway cell wall biogenesis; peptidoglycan biosynthesis. Its function is as follows. Catalyzes the initial step of the lipid cycle reactions in the biosynthesis of the cell wall peptidoglycan: transfers peptidoglycan precursor phospho-MurNAc-pentapeptide from UDP-MurNAc-pentapeptide onto the lipid carrier undecaprenyl phosphate, yielding undecaprenyl-pyrophosphoryl-MurNAc-pentapeptide, known as lipid I. The sequence is that of Phospho-N-acetylmuramoyl-pentapeptide-transferase from Bradyrhizobium sp. (strain ORS 278).